A 251-amino-acid polypeptide reads, in one-letter code: Aquaporin (251 aa).

The Cytoplasmic segment spans residues 1-11 (MAKEALKTLQS). Residues 12 to 32 (MFGEMVASFVFGFAVYSAILG) traverse the membrane as a helical segment. Residues 33-42 (SSISQSSADK) are Extracellular-facing. Residues 43-63 (VIVGLTVGFSGIGVIYSFCDV) traverse the membrane as a helical segment. Residues 64 to 86 (TIAHFNPAITLAAILTSKIDVLQ) lie on the Cytoplasmic side of the membrane. The short motif at 69-71 (NPA) is the NPA element. The chain crosses the membrane as a helical span at residues 87–107 (GLGYMLAQYIGFMLAVCALLV). Residues 108-133 (CSPVEYKETLDTIRPGPTDFGATSLN) lie on the Extracellular side of the membrane. Residues 134-154 (VFFAEFFLTAIFVHIVFATAV) traverse the membrane as a helical segment. The Cytoplasmic portion of the chain corresponds to 155–179 (NPYKPKVDTEGKFVDPDEKEPVDRR). The chain crosses the membrane as a helical span at residues 180–200 (ITAPLCIGLTLGFLAFMGLAS). Residues 201-224 (SGGAFNPGLTFAPMAMSNTWSHFW) are Extracellular-facing. The NPG motif lies at 206-208 (NPG). The chain crosses the membrane as a helical span at residues 225–245 (IYLGGQYLGGLTGGLLQVLVL). Topologically, residues 246-251 (YKLSSD) are cytoplasmic.

It belongs to the MIP/aquaporin (TC 1.A.8) family.

The protein resides in the cell membrane. Water channel required to facilitate the transport of water across membranes. Involved in osmotolerance. This is Aquaporin (AQP) from Encephalitozoon intestinalis (Microsporidian parasite).